The sequence spans 553 residues: Pseudouridylate synthase RPUSD2 (553 aa).

Residues 76–135 (AVGKQVPESGDQAQGGEGQLPSNGEQTPAPVADSGKRKKRRGATGERVVPPPKKRRTGVS) are disordered. Aspartate 287 is an active-site residue. The residue at position 490 (threonine 490) is a Phosphothreonine.

The protein belongs to the pseudouridine synthase RluA family.

It catalyses the reaction a uridine in mRNA = a pseudouridine in mRNA. Pseudouridine synthase that catalyzes pseudouridylation of mRNAs. This is Pseudouridylate synthase RPUSD2 from Mus musculus (Mouse).